The chain runs to 252 residues: Enolase-phosphatase E1 (252 aa).

Aspartate 18 and glutamate 20 together coordinate Mg(2+). Residues 149–150 and lysine 184 each bind substrate; that span reads SS. Aspartate 209 is a binding site for Mg(2+).

It belongs to the HAD-like hydrolase superfamily. MasA/MtnC family. Monomer. The cofactor is Mg(2+).

It is found in the cytoplasm. It localises to the nucleus. The catalysed reaction is 5-methylsulfanyl-2,3-dioxopentyl phosphate + H2O = 1,2-dihydroxy-5-(methylsulfanyl)pent-1-en-3-one + phosphate. The protein operates within amino-acid biosynthesis; L-methionine biosynthesis via salvage pathway; L-methionine from S-methyl-5-thio-alpha-D-ribose 1-phosphate: step 3/6. It functions in the pathway amino-acid biosynthesis; L-methionine biosynthesis via salvage pathway; L-methionine from S-methyl-5-thio-alpha-D-ribose 1-phosphate: step 4/6. In terms of biological role, bifunctional enzyme that catalyzes the enolization of 2,3-diketo-5-methylthiopentyl-1-phosphate (DK-MTP-1-P) into the intermediate 2-hydroxy-3-keto-5-methylthiopentenyl-1-phosphate (HK-MTPenyl-1-P), which is then dephosphorylated to form the acireductone 1,2-dihydroxy-3-keto-5-methylthiopentene (DHK-MTPene). The sequence is that of Enolase-phosphatase E1 from Naegleria gruberi (Amoeba).